The following is a 153-amino-acid chain: SsrA-binding protein (153 aa).

The protein belongs to the SmpB family.

It is found in the cytoplasm. Required for rescue of stalled ribosomes mediated by trans-translation. Binds to transfer-messenger RNA (tmRNA), required for stable association of tmRNA with ribosomes. tmRNA and SmpB together mimic tRNA shape, replacing the anticodon stem-loop with SmpB. tmRNA is encoded by the ssrA gene; the 2 termini fold to resemble tRNA(Ala) and it encodes a 'tag peptide', a short internal open reading frame. During trans-translation Ala-aminoacylated tmRNA acts like a tRNA, entering the A-site of stalled ribosomes, displacing the stalled mRNA. The ribosome then switches to translate the ORF on the tmRNA; the nascent peptide is terminated with the 'tag peptide' encoded by the tmRNA and targeted for degradation. The ribosome is freed to recommence translation, which seems to be the essential function of trans-translation. The sequence is that of SsrA-binding protein from Cytophaga hutchinsonii (strain ATCC 33406 / DSM 1761 / CIP 103989 / NBRC 15051 / NCIMB 9469 / D465).